A 76-amino-acid polypeptide reads, in one-letter code: Conotoxin Lt6.1 (76 aa).

Residues 1–22 (MKLTCVLIIAVLFLMDNQLITA) form the signal peptide. Residues 23–48 (DYPRDEQVYRAVRLRDAMQKSKGSGS) constitute a propeptide that is removed on maturation. 3 disulfides stabilise this stretch: C49-C62, C56-C67, and C61-C75.

Belongs to the conotoxin O1 superfamily. Expressed by the venom duct.

It is found in the secreted. This is Conotoxin Lt6.1 from Conus litteratus (Lettered cone).